Reading from the N-terminus, the 211-residue chain is Orotate phosphoribosyltransferase (211 aa).

Residues R103, K107, H109, and 129 to 137 (EDLISTGKS) each bind 5-phospho-alpha-D-ribose 1-diphosphate. S133 lines the orotate pocket.

This sequence belongs to the purine/pyrimidine phosphoribosyltransferase family. PyrE subfamily. Homodimer. Mg(2+) serves as cofactor.

The enzyme catalyses orotidine 5'-phosphate + diphosphate = orotate + 5-phospho-alpha-D-ribose 1-diphosphate. Its pathway is pyrimidine metabolism; UMP biosynthesis via de novo pathway; UMP from orotate: step 1/2. Its function is as follows. Catalyzes the transfer of a ribosyl phosphate group from 5-phosphoribose 1-diphosphate to orotate, leading to the formation of orotidine monophosphate (OMP). In Fusobacterium nucleatum subsp. nucleatum (strain ATCC 25586 / DSM 15643 / BCRC 10681 / CIP 101130 / JCM 8532 / KCTC 2640 / LMG 13131 / VPI 4355), this protein is Orotate phosphoribosyltransferase.